A 183-amino-acid polypeptide reads, in one-letter code: Large ribosomal subunit protein mL43 (183 aa).

Disordered stretches follow at residues histidine 120–glycine 144 and proline 162–glutamate 183. Positions aspartate 122 to proline 139 are enriched in polar residues. A compositionally biased stretch (basic and acidic residues) spans proline 162–isoleucine 172.

It belongs to the mitochondrion-specific ribosomal protein mL43 family. In terms of assembly, component of the mitochondrial ribosome large subunit (39S) which comprises a 16S rRNA and about 50 distinct proteins. Ubiquitous with the highest levels in the liver, heart and kidneys. The skeletal muscle, brain and testis showed lower but detectable expression. Expression is coregulated with TWNK.

The protein resides in the mitochondrion. This Mus musculus (Mouse) protein is Large ribosomal subunit protein mL43 (Mrpl43).